A 399-amino-acid polypeptide reads, in one-letter code: Argininosuccinate synthase (399 aa).

Position 9–17 (9–17 (AYSGGLDTS)) interacts with ATP. Tyrosine 87 is an L-citrulline binding site. Glycine 117 is an ATP binding site. 3 residues coordinate L-aspartate: threonine 119, asparagine 123, and aspartate 124. L-citrulline is bound at residue asparagine 123. L-citrulline is bound by residues arginine 127, serine 176, serine 185, glutamate 261, and tyrosine 273.

It belongs to the argininosuccinate synthase family. Type 1 subfamily. In terms of assembly, homotetramer.

It localises to the cytoplasm. The enzyme catalyses L-citrulline + L-aspartate + ATP = 2-(N(omega)-L-arginino)succinate + AMP + diphosphate + H(+). Its pathway is amino-acid biosynthesis; L-arginine biosynthesis; L-arginine from L-ornithine and carbamoyl phosphate: step 2/3. The protein is Argininosuccinate synthase of Chlorobium chlorochromatii (strain CaD3).